Consider the following 510-residue polypeptide: Peroxidase 2 (510 aa).

The first 19 residues, 1–19 (MRLTYLPLFAGIAIQSASA), serve as a signal peptide directing secretion. Positions 20–58 (LPDFFKSSVLKPRRTNSLLINPDAQPDLPTAQQASTAAA) are excised as a propeptide. Asp-228 (proton acceptor) is an active-site residue. His-362 is a heme binding site.

Homodimer. Heme b serves as cofactor.

In terms of biological role, peroxidase capable of degrading beta-carotene. This chain is Peroxidase 2, found in Mycetinis scorodonius (Garlic mushroom).